Reading from the N-terminus, the 393-residue chain is Sulfate adenylyltransferase (393 aa).

Belongs to the sulfate adenylyltransferase family.

The catalysed reaction is sulfate + ATP + H(+) = adenosine 5'-phosphosulfate + diphosphate. Its pathway is sulfur metabolism; hydrogen sulfide biosynthesis; sulfite from sulfate: step 1/3. The protein is Sulfate adenylyltransferase of Synechococcus sp. (strain JA-3-3Ab) (Cyanobacteria bacterium Yellowstone A-Prime).